Here is a 520-residue protein sequence, read N- to C-terminus: Basal body-orientation factor 1 (520 aa).

The segment covering 1–21 has biased composition (basic residues); it reads MPKKKGKGKGKGKGKGKGKKD. A disordered region spans residues 1–34; that stretch reads MPKKKGKGKGKGKGKGKGKKDGKHDSKADRESEI. Positions 22 to 34 are enriched in basic and acidic residues; that stretch reads GKHDSKADRESEI. 2 coiled-coil regions span residues 27 to 175 and 245 to 386; these read KADR…REKM and VKEA…RQEA. Residues 468–492 are disordered; sequence AHPPALSASSSEKIQVSSDAGSTVE. Residues 469 to 478 are compositionally biased toward low complexity; the sequence is HPPALSASSS. Residues 479–492 are compositionally biased toward polar residues; that stretch reads EKIQVSSDAGSTVE.

It belongs to the BBOF1 family.

It is found in the cytoplasm. Its subcellular location is the cytoskeleton. The protein localises to the cilium basal body. In terms of biological role, basal body protein required in multiciliate cells to align and maintain cilia orientation in response to flow. May act by mediating a maturation step that stabilizes and aligns cilia orientation. Not required to respond to planar cell polarity (PCP) or flow-based orientation cues. The chain is Basal body-orientation factor 1 from Danio rerio (Zebrafish).